The chain runs to 337 residues: Delta-aminolevulinic acid dehydratase (337 aa).

Lys-205 (schiff-base intermediate with substrate) is an active-site residue. 5-aminolevulinate is bound by residues Arg-215 and Lys-229. Glu-245 provides a ligand contact to Mg(2+). Residue Lys-260 is the Schiff-base intermediate with substrate of the active site. Positions 286 and 324 each coordinate 5-aminolevulinate.

The protein belongs to the ALAD family. In terms of assembly, homooctamer; formed by oligomerization of dimers. Mg(2+) serves as cofactor.

It carries out the reaction 2 5-aminolevulinate = porphobilinogen + 2 H2O + H(+). It functions in the pathway porphyrin-containing compound metabolism; protoporphyrin-IX biosynthesis; coproporphyrinogen-III from 5-aminolevulinate: step 1/4. Its activity is regulated as follows. Stimulated by magnesium ions. In terms of biological role, catalyzes an early step in the biosynthesis of tetrapyrroles. Binds two molecules of 5-aminolevulinate per subunit, each at a distinct site, and catalyzes their condensation to form porphobilinogen. The protein is Delta-aminolevulinic acid dehydratase (hemB) of Pseudomonas aeruginosa (strain ATCC 15692 / DSM 22644 / CIP 104116 / JCM 14847 / LMG 12228 / 1C / PRS 101 / PAO1).